The following is a 922-amino-acid chain: Protein translocase subunit SecA (922 aa).

ATP is bound by residues glutamine 87, 105–109 (GEGKT), and aspartate 519. Positions 850-891 (HASRQMRSIQGNAQHNSMGSFSGSGHGMGPTALSARSRPENA) are disordered. Residues 854–865 (QMRSIQGNAQHN) are compositionally biased toward polar residues. Residues cysteine 906, cysteine 908, cysteine 917, and cysteine 918 each contribute to the Zn(2+) site.

The protein belongs to the SecA family. In terms of assembly, monomer and homodimer. Part of the essential Sec protein translocation apparatus which comprises SecA, SecYEG and auxiliary proteins SecDF. Other proteins may also be involved. Zn(2+) serves as cofactor.

It localises to the cell inner membrane. The protein resides in the cytoplasm. The catalysed reaction is ATP + H2O + cellular proteinSide 1 = ADP + phosphate + cellular proteinSide 2.. In terms of biological role, part of the Sec protein translocase complex. Interacts with the SecYEG preprotein conducting channel. Has a central role in coupling the hydrolysis of ATP to the transfer of proteins into and across the cell membrane, serving as an ATP-driven molecular motor driving the stepwise translocation of polypeptide chains across the membrane. This is Protein translocase subunit SecA from Treponema denticola (strain ATCC 35405 / DSM 14222 / CIP 103919 / JCM 8153 / KCTC 15104).